Reading from the N-terminus, the 67-residue chain is Large ribosomal subunit protein bL32 (67 aa).

Positions 1–44 are disordered; it reads MAVQQNRKSPSKRDMRRSHDALGFSTLSTDSKSGERHRRHHVTK. The span at 11-20 shows a compositional bias: basic and acidic residues; sequence SKRDMRRSHD.

This sequence belongs to the bacterial ribosomal protein bL32 family.

In Dichelobacter nodosus (strain VCS1703A), this protein is Large ribosomal subunit protein bL32.